Consider the following 358-residue polypeptide: Nuclease EXOG, mitochondrial (358 aa).

His-132 acts as the Proton acceptor in catalysis. Asn-163 is a binding site for a divalent metal cation.

It belongs to the DNA/RNA non-specific endonuclease family. Homodimer. A divalent metal cation is required as a cofactor.

It localises to the mitochondrion inner membrane. In terms of biological role, endo/exonuclease with nicking activity towards supercoiled DNA, a preference for single-stranded DNA and 5'-3' exonuclease activity. The protein is Nuclease EXOG, mitochondrial (exog) of Xenopus laevis (African clawed frog).